The chain runs to 407 residues: Patatin-like protein 2 (407 aa).

The PNPLA domain maps to 22–228 (LSIDGGGIRG…AANNPALLAI (207 aa)). Positions 26-31 (GGGIRG) match the GXGXXG motif. The GXSXG motif lies at 64–68 (GTSTG). The active-site Nucleophile is S66. D215 (proton acceptor) is an active-site residue. The DGA/G signature appears at 215 to 217 (DGG). A Phosphoserine modification is found at S398.

Belongs to the patatin family. As to expression, expressed specifically in roots.

Its subcellular location is the cytoplasm. Functionally, possesses non-specific lipolytic acyl hydrolase (LAH) activity. Catalyzes the hydrolysis of the galactolipids monogalactosyldiacylglycerol (MGDG) and digalactosyldiacylglycerol (DGDG), and less efficiently the phoshpolipids phosphatidylcholine (PC), phosphatidylethanolamine (PE), phosphatidylglycerol (PG), phosphatidic acid (PA), phosphatidylserine (PS) and phosphatidylinositol (PI). Favors the release of fatty acid at the sn-1 position for PC or PE and the sn-2 position for PG, PA, PS and PI. Negatively affects disease resistance to the necrotic fungal pathogen Botrytis cinerea and the avirulent bacteria Pseudomonas syringae by promoting cell death and reducing the efficiency of the hypersensitive response, respectively. However, PLP2 contributes to resistance to cucumber mosaic virus (CMV), an obligate parasite inducing hypersensitive response. May negatively regulate oxylipin production, possibly via participating in membrane repair that includes removal of oxidatively modified lipids. This chain is Patatin-like protein 2 (PLP2), found in Arabidopsis thaliana (Mouse-ear cress).